Consider the following 244-residue polypeptide: Na(+)-translocating NADH-quinone reductase subunit E (244 aa).

A run of 6 helical transmembrane segments spans residues 11-31 (LLGI…TFLG), 47-67 (GLGM…WLIH), 90-110 (FLEL…LELL), 123-143 (GIFL…LFGI), 153-173 (VVFS…FATI), and 189-209 (MGIS…LTGI).

The protein belongs to the NqrDE/RnfAE family. Composed of six subunits; NqrA, NqrB, NqrC, NqrD, NqrE and NqrF.

It is found in the cell inner membrane. The enzyme catalyses a ubiquinone + n Na(+)(in) + NADH + H(+) = a ubiquinol + n Na(+)(out) + NAD(+). Its function is as follows. NQR complex catalyzes the reduction of ubiquinone-1 to ubiquinol by two successive reactions, coupled with the transport of Na(+) ions from the cytoplasm to the periplasm. NqrA to NqrE are probably involved in the second step, the conversion of ubisemiquinone to ubiquinol. This chain is Na(+)-translocating NADH-quinone reductase subunit E, found in Chlamydia muridarum (strain MoPn / Nigg).